A 286-amino-acid chain; its full sequence is Non-homologous end joining protein Ku (286 aa).

The Ku domain maps to 10–175 (TVGLVSFPVR…EEVREPDFVV (166 aa)). Over residues 226 to 242 (ERQERQRREAGEVRQAD) the composition is skewed to basic and acidic residues. Positions 226–270 (ERQERQRREAGEVRQADETDEAAETEVPEVDIPASRAPGETGGEL) are disordered. The segment covering 243 to 254 (ETDEAAETEVPE) has biased composition (acidic residues).

Belongs to the prokaryotic Ku family. In terms of assembly, homodimer. Interacts with LigD.

With LigD forms a non-homologous end joining (NHEJ) DNA repair enzyme, which repairs dsDNA breaks with reduced fidelity. Binds linear dsDNA with 5'- and 3'- overhangs but not closed circular dsDNA nor ssDNA. Recruits and stimulates the ligase activity of LigD. The polypeptide is Non-homologous end joining protein Ku (Actinosynnema mirum (strain ATCC 29888 / DSM 43827 / JCM 3225 / NBRC 14064 / NCIMB 13271 / NRRL B-12336 / IMRU 3971 / 101)).